A 245-amino-acid chain; its full sequence is tRNA1(Val) (adenine(37)-N6)-methyltransferase (245 aa).

Belongs to the methyltransferase superfamily. tRNA (adenine-N(6)-)-methyltransferase family.

It is found in the cytoplasm. The catalysed reaction is adenosine(37) in tRNA1(Val) + S-adenosyl-L-methionine = N(6)-methyladenosine(37) in tRNA1(Val) + S-adenosyl-L-homocysteine + H(+). Specifically methylates the adenine in position 37 of tRNA(1)(Val) (anticodon cmo5UAC). This Enterobacter sp. (strain 638) protein is tRNA1(Val) (adenine(37)-N6)-methyltransferase.